Reading from the N-terminus, the 146-residue chain is Heat-stable 19 kDa antigen (146 aa).

The signal sequence occupies residues Met-1–Ala-20.

Belongs to the cerato-platanin family. In terms of processing, glycosylated.

The protein localises to the secreted. The protein is Heat-stable 19 kDa antigen (CSA) of Coccidioides immitis (strain RS) (Valley fever fungus).